Consider the following 533-residue polypeptide: Cytochrome P450 9e2 (533 aa).

Residue cysteine 475 participates in heme binding.

It belongs to the cytochrome P450 family. Requires heme as cofactor.

Its subcellular location is the endoplasmic reticulum membrane. It localises to the microsome membrane. The chain is Cytochrome P450 9e2 (CYP9E2) from Blattella germanica (German cockroach).